We begin with the raw amino-acid sequence, 554 residues long: Solute carrier family 22 member 1 (554 aa).

The Cytoplasmic segment spans residues 1 to 24; sequence MPSVDDVLEQVGEFGWFQKQAFLN. Residues 25-45 form a helical membrane-spanning segment; it reads LCLTSVAFAPIYVGIVFLGFT. Residues 46-234 are Extracellular-facing; that stretch reads PDHRCRSPGV…EFVGLGYRKT (189 aa). An N-linked (GlcNAc...) asparagine glycan is attached at Asn71. A helical transmembrane segment spans residues 235 to 255; the sequence is VAILYQTAFSVGLVLLSGLAY. Over 256 to 261 the chain is Cytoplasmic; the sequence is AVPHWR. The helical transmembrane segment at 262–282 threads the bilayer; the sequence is SLQLAVSLPIFLLLLCYWFVP. Positions 282–286 match the Proline-rich sequence motif; it reads PESPR. Residues 283–347 lie on the Extracellular side of the membrane; it reads ESPRWLLSQK…FRTQNLRKYT (65 aa). Residue Ser333 is modified to Phosphoserine. Residues 348–368 form a helical membrane-spanning segment; sequence FILMYLWFTSSVLYQGLIMHV. Topologically, residues 369 to 376 are cytoplasmic; sequence GATGGSLY. Residues 377 to 397 traverse the membrane as a helical segment; sequence LDFLYSALVEFPAAFVILLII. Topologically, residues 398–402 are extracellular; that stretch reads DRFGR. A helical membrane pass occupies residues 403 to 423; the sequence is LYLLAGSNLLAGAACFFMIFI. Topologically, residues 424–431 are cytoplasmic; it reads SHDLHWLS. The chain crosses the membrane as a helical span at residues 432–452; the sequence is IVAACIGRMGITIVFQMVCLV. Topologically, residues 453–464 are extracellular; sequence SAELYPTFIRNL. A helical membrane pass occupies residues 465–485; sequence GVMVCSSLCDLGGVVAPFLVF. Over 486–492 the chain is Cytoplasmic; sequence RLTEVWR. A helical membrane pass occupies residues 493–513; sequence GLPLVLFAALGLVAGGMSLLL. At 514 to 554 the chain is on the extracellular side; it reads PETKGVALPETIEEVERLGRKAKPRDNMIYLQVKMPEPAGL.

This sequence belongs to the major facilitator (TC 2.A.1) superfamily. Organic cation transporter (TC 2.A.1.19) family. Phosphorylated.

Its subcellular location is the basolateral cell membrane. The protein resides in the apical cell membrane. It is found in the lateral cell membrane. The protein localises to the basal cell membrane. It localises to the cell membrane. It carries out the reaction 1-methylnicotinamide(out) = 1-methylnicotinamide(in). The catalysed reaction is dopamine(out) = dopamine(in). The enzyme catalyses serotonin(out) = serotonin(in). It catalyses the reaction (R)-adrenaline(out) = (R)-adrenaline(in). It carries out the reaction (R)-noradrenaline(out) = (R)-noradrenaline(in). The catalysed reaction is histamine(out) = histamine(in). The enzyme catalyses guanidine(out) = guanidine(in). It catalyses the reaction choline(out) = choline(in). It carries out the reaction acetylcholine(in) = acetylcholine(out). The catalysed reaction is thiamine(in) = thiamine(out). The enzyme catalyses spermidine(in) = spermidine(out). It catalyses the reaction agmatine(out) = agmatine(in). It carries out the reaction putrescine(out) = putrescine(in). The catalysed reaction is (R)-carnitine(in) = (R)-carnitine(out). The enzyme catalyses O-isobutanoyl-(R)-carnitine(in) = O-isobutanoyl-(R)-carnitine(out). It catalyses the reaction O-acetyl-(R)-carnitine(in) = O-acetyl-(R)-carnitine(out). It carries out the reaction O-3-hydroxybutanoyl-(R)-carnitine(in) = O-3-hydroxybutanoyl-(R)-carnitine(out). The catalysed reaction is O-propanoyl-(R)-carnitine(in) = O-propanoyl-(R)-carnitine(out). The enzyme catalyses O-butanoyl-(R)-carnitine(in) = O-butanoyl-(R)-carnitine(out). It catalyses the reaction O-2-methylbutanoyl-(R)-carnitine(in) = O-2-methylbutanoyl-(R)-carnitine(out). It carries out the reaction O-3-methylbutanoyl-(R)-carnitine(in) = O-3-methylbutanoyl-(R)-carnitine(out). The catalysed reaction is O-hexanoyl-(R)-carnitine(in) = O-hexanoyl-(R)-carnitine(out). The enzyme catalyses L-histidyl-L-proline diketopiperazine(in) = L-histidyl-L-proline diketopiperazine(out). It catalyses the reaction (R)-salsolinol(in) = (R)-salsolinol(out). It carries out the reaction prostaglandin F2alpha(out) = prostaglandin F2alpha(in). The catalysed reaction is prostaglandin E2(out) = prostaglandin E2(in). Phosphorylation of the transporter leads to changes in its substrate affinity, resulting in a regulation of the transport activity. In contrast with rat ortholog, ASP uptake is inhibited by protein kinase A (PKA) and C (PKC) activation. ASP uptake is also endogenously activated by calmodulin, the calmodulin-dependent kinase II and LCK tyrosine kinase. Inhibited by cGMP, most likely through a cGMP-binding protein that interacts with OCT1. Functionally, electrogenic voltage-dependent transporter that mediates the transport of a variety of organic cations such as endogenous bioactive amines, cationic drugs and xenobiotics. Functions as a pH- and Na(+)-independent, bidirectional transporter. Cation cellular uptake or release is driven by the electrochemical potential (i.e. membrane potential and concentration gradient) and substrate selectivity. Hydrophobicity is a major requirement for recognition in polyvalent substrates and inhibitors. Primarily expressed in the basolateral membrane of hepatocytes and proximal tubules and involved in the uptake and disposition of cationic compounds from the blood by hepatic and renal clearance. Most likely functions as an uptake carrier in enterocytes contributing to the intestinal elimination of organic cations from the systemic circulation. Transports endogenous monoamines such as N-1-methylnicotinamide (NMN), guanidine, neurotransmitters dopamine, serotonin, noradrenaline, adrenaline and histamine, and quaternary ammonium compound such as choline. Also transports natural polyamines such as spermidine, agmatine and putrescine at low affinity, but relatively high turnover. Involved in the hepatic and intestinal uptake of the vitamin B1/thiamine, hence regulating hepatic lipid and energy metabolism. Contributes to the influx and efflux of fatty acid carriers carnitines and acylcarnitines across the basolateral membrane of hepatocytes, from the liver to the systemic circulation and inversely and may be involved in regulating the systemic availability of hepatic acylcarnitines. Also capable of transporting non-amine endogenous compounds such as prostaglandin E2 (PGE2) and prostaglandin F2-alpha (PGF2-alpha). May contribute to the transport of cationic compounds in testes across the blood-testis-barrier. Also mediates the uptake of xenobiotics tributylmethylammonium (TBuMA), quinidine, N-methyl-quinine (NMQ), N-methyl-quinidine (NMQD) N-(4,4-azo-n-pentyl)-quinuclidine (APQ), azidoprocainamide methoiodide (AMP), N-(4,4-azo-n-pentyl)-21-deoxyajmalinium (APDA) and 4-(4-(dimethylamino)styryl)-N-methylpyridinium (ASP). The polypeptide is Solute carrier family 22 member 1 (SLC22A1) (Sus scrofa (Pig)).